A 288-amino-acid polypeptide reads, in one-letter code: MESYKCRVCFKSFVNGKALGGHMRSHMSNSHEEEQRPSQLSYETESDVSSSDPKFAFTSSVLLEDGESESESSRNVINLTRKRSKRTRKLDSFVTKKVKTSQLGYKPESDQEPPHSSASDTTTEEDLAFCLMMLSRDKWKKNKSNKEVVEEIETEEESEGYNKINRATTKGRYKCETCGKVFKSYQALGGHRASHKKNRVSNNKTEQRSETEYDNVVVVAKRIHECPICLRVFASGQALGGHKRSHGVGNLSVNQQRRVHRNESVKQRMIDLNLPAPTEEDEVSVVFQ.

The segment at 4–26 adopts a C2H2-type 1 zinc-finger fold; sequence YKCRVCFKSFVNGKALGGHMRSH. Disordered stretches follow at residues 20–82, 101–123, and 189–210; these read GGHM…LTRK, SQLG…DTTT, and GGHR…QRSE. The segment covering 37-52 has biased composition (polar residues); the sequence is PSQLSYETESDVSSSD. C2H2-type zinc fingers lie at residues 173–195 and 224–246; these read YKCE…RASH and HECP…KRSH.

Its subcellular location is the nucleus. Its function is as follows. Probable transcription factor that may be involved in stress responses. This Arabidopsis thaliana (Mouse-ear cress) protein is Zinc finger protein ZAT9 (ZAT9).